The following is a 218-amino-acid chain: MSIISSEAQKVRQALIKKGIETPTIELTQDKDSRRAEIQQHMRSVLELLGLDLRDDSLEETPHRLAKMYVDEIFSGLDYATFPKITTIENRMKVSEMVLVDDITLTSTCEHHFVTIDGKVAVAYYPKKWVIGLSKINRVVQFFAQRPQVQERFTEQILTAFQTILETEDVAIYVKATHFCVKCRGIKDSNSYTVTSAFGGVFLDDRETRKEFLNLIHK.

Residues cysteine 109, histidine 112, and cysteine 180 each coordinate Zn(2+).

The protein belongs to the GTP cyclohydrolase I family. Toroid-shaped homodecamer, composed of two pentamers of five dimers.

The catalysed reaction is GTP + H2O = 7,8-dihydroneopterin 3'-triphosphate + formate + H(+). Its pathway is cofactor biosynthesis; 7,8-dihydroneopterin triphosphate biosynthesis; 7,8-dihydroneopterin triphosphate from GTP: step 1/1. This Haemophilus ducreyi (strain 35000HP / ATCC 700724) protein is GTP cyclohydrolase 1.